The primary structure comprises 203 residues: Holliday junction branch migration complex subunit RuvA (203 aa).

Residues methionine 1–asparagine 64 form a domain I region. Positions asparagine 65–proline 142 are domain II. Positions alanine 143–proline 154 are flexible linker. The segment at alanine 155 to leucine 203 is domain III.

This sequence belongs to the RuvA family. In terms of assembly, homotetramer. Forms an RuvA(8)-RuvB(12)-Holliday junction (HJ) complex. HJ DNA is sandwiched between 2 RuvA tetramers; dsDNA enters through RuvA and exits via RuvB. An RuvB hexamer assembles on each DNA strand where it exits the tetramer. Each RuvB hexamer is contacted by two RuvA subunits (via domain III) on 2 adjacent RuvB subunits; this complex drives branch migration. In the full resolvosome a probable DNA-RuvA(4)-RuvB(12)-RuvC(2) complex forms which resolves the HJ.

It is found in the cytoplasm. The RuvA-RuvB-RuvC complex processes Holliday junction (HJ) DNA during genetic recombination and DNA repair, while the RuvA-RuvB complex plays an important role in the rescue of blocked DNA replication forks via replication fork reversal (RFR). RuvA specifically binds to HJ cruciform DNA, conferring on it an open structure. The RuvB hexamer acts as an ATP-dependent pump, pulling dsDNA into and through the RuvAB complex. HJ branch migration allows RuvC to scan DNA until it finds its consensus sequence, where it cleaves and resolves the cruciform DNA. The chain is Holliday junction branch migration complex subunit RuvA from Citrobacter koseri (strain ATCC BAA-895 / CDC 4225-83 / SGSC4696).